The chain runs to 266 residues: Nickel import ATP-binding protein NikE (266 aa).

The 249-residue stretch at 4 to 252 folds into the ABC transporter domain; sequence ISADNIVKIY…RHPASRLLRE (249 aa). 45-52 provides a ligand contact to ATP; that stretch reads GRSGCGKS.

This sequence belongs to the ABC transporter superfamily. Nickel importer (TC 3.A.1.5.3) family. The complex is composed of two ATP-binding proteins (NikD and NikE), two transmembrane proteins (NikB and NikC) and a solute-binding protein (NikA).

It is found in the cell inner membrane. The catalysed reaction is Ni(2+)(out) + ATP + H2O = Ni(2+)(in) + ADP + phosphate + H(+). Its function is as follows. Part of the ABC transporter complex NikABCDE involved in nickel import. Responsible for energy coupling to the transport system. This Brucella abortus (strain 2308) protein is Nickel import ATP-binding protein NikE.